The chain runs to 267 residues: Syntaxin-72 (267 aa).

Topologically, residues 1–244 are cytoplasmic; it reads MPVIDIIFRV…QLVQMRSSRN (244 aa). Residues 53–87 are a coiled coil; the sequence is KAELASTEKNRAAAVAMNAEVRRTKARLAEDVVKL. A t-SNARE coiled-coil homology domain is found at 173 to 235; it reads EMRRKKQDEG…KNTNVRLKKQ (63 aa). The helical; Anchor for type IV membrane protein transmembrane segment at 245–265 threads the bilayer; sequence FCIDIILLCVILGIVSYIYNA. Residues 266–267 lie on the Vesicular side of the membrane; it reads LN.

This sequence belongs to the syntaxin family. Part of the t-SNARE complex. As to expression, expressed in root, leaf, stem, flower and silique.

It localises to the membrane. In terms of biological role, vesicle trafficking protein that functions in the secretory pathway. The protein is Syntaxin-72 (SYP72) of Arabidopsis thaliana (Mouse-ear cress).